Here is a 31-residue protein sequence, read N- to C-terminus: ESAPAPEVSGDAVFSAIQNGXLKNLGNAFFW.

The protein localises to the secreted. In terms of biological role, antifungal activity against C.albicans ATCC 76615. The polypeptide is Antifungal protein 1 (Musca domestica (House fly)).